A 682-amino-acid polypeptide reads, in one-letter code: Penicillin-binding protein activator LpoA (682 aa).

The first 26 residues, 1–26 (MLPLNSVRTHAGRLVPVMLAALFLAG), serve as a signal peptide directing secretion. The N-palmitoyl cysteine moiety is linked to residue Cys-27. The S-diacylglycerol cysteine moiety is linked to residue Cys-27. Disordered regions lie at residues 240–262 (AKQLPSQLGGTPPAAAAPTTGET) and 314–341 (ANNAAAATPGAPAVPSPASSTPSAVSPT). The span at 248-262 (GGTPPAAAAPTTGET) shows a compositional bias: low complexity.

This sequence belongs to the LpoA family. As to quaternary structure, interacts with PBP1a.

Its subcellular location is the cell outer membrane. Functionally, regulator of peptidoglycan synthesis that is essential for the function of penicillin-binding protein 1A (PBP1a). The polypeptide is Penicillin-binding protein activator LpoA (Dickeya chrysanthemi (strain Ech1591) (Dickeya zeae (strain Ech1591))).